A 100-amino-acid polypeptide reads, in one-letter code: Testis development-related protein 1 (100 aa).

A disordered region spans residues 73–100 (GLGSLGGQDSSGSLVQRASCELESPYEL).

Expressed in the testis but not in any other non-reproductive tissues (at protein level). Mainly located in spermatogenic cells in seminiferous tubules of adult testis.

It localises to the cytoplasm. The sequence is that of Testis development-related protein 1 (TDRG1) from Homo sapiens (Human).